A 346-amino-acid chain; its full sequence is Uricase (346 aa).

The interval 1 to 23 is disordered; the sequence is MFATPLRQPTNASGARPAVSMDG. Active-site charge relay system residues include Lys-39 and Thr-84. The urate site is built by Thr-84, Asp-85, Phe-208, Arg-225, Val-273, Gln-274, and Asn-300. Residue His-302 is the Charge relay system of the active site. A Microbody targeting signal motif is present at residues 344 to 346; that stretch reads SHL.

Belongs to the uricase family. In terms of tissue distribution, malpighian tubules.

Its subcellular location is the peroxisome. The enzyme catalyses urate + O2 + H2O = 5-hydroxyisourate + H2O2. It participates in purine metabolism; urate degradation; (S)-allantoin from urate: step 1/3. Its activity is regulated as follows. Repressed by 20-hydroxyecdysone. Catalyzes the oxidation of uric acid to 5-hydroxyisourate, which is further processed to form (S)-allantoin. In Drosophila pseudoobscura pseudoobscura (Fruit fly), this protein is Uricase (Uro).